The sequence spans 328 residues: Porphobilinogen deaminase (328 aa).

An S-(dipyrrolylmethanemethyl)cysteine modification is found at cysteine 250.

It belongs to the HMBS family. In terms of assembly, monomer. It depends on dipyrromethane as a cofactor.

It carries out the reaction 4 porphobilinogen + H2O = hydroxymethylbilane + 4 NH4(+). The protein operates within porphyrin-containing compound metabolism; protoporphyrin-IX biosynthesis; coproporphyrinogen-III from 5-aminolevulinate: step 2/4. Its function is as follows. Tetrapolymerization of the monopyrrole PBG into the hydroxymethylbilane pre-uroporphyrinogen in several discrete steps. The protein is Porphobilinogen deaminase of Burkholderia ambifaria (strain ATCC BAA-244 / DSM 16087 / CCUG 44356 / LMG 19182 / AMMD) (Burkholderia cepacia (strain AMMD)).